Here is a 442-residue protein sequence, read N- to C-terminus: Serine protease AprX (442 aa).

The Peptidase S8 domain maps to 122–439 (KALLDTATEA…AGAVNAENSV (318 aa)). Residues aspartate 155 and histidine 187 each act as charge relay system in the active site. The segment at 318 to 337 (DNNTASSDDDTVASFSSRGP) is disordered. The active-site Charge relay system is serine 384. The interval 423–442 (EDPNIYGAGAVNAENSVPGQ) is disordered.

The protein belongs to the peptidase S8 family.

The protein localises to the cytoplasm. Is completely inhibited by phenylmethanesulphonylfluoride (PMSF) in vitro. Displays serine protease activity. Seems to have a broad substrate specificity. This chain is Serine protease AprX (aprX), found in Bacillus subtilis (strain 168).